Consider the following 422-residue polypeptide: Ubiquitin-conjugating enzyme E2 Q1 (422 aa).

Met-1 carries the N-acetylmethionine modification. Low complexity predominate over residues 1-15 (MQQPQPQGQQQPGPG). 2 disordered regions span residues 1-40 (MQQPQPQGQQQPGPGQQLGGQGAAPGAGGGPGGGPGPGPC) and 174-221 (PLPA…EDDG). Gly residues predominate over residues 16 to 35 (QQLGGQGAAPGAGGGPGGGP). Residues 185-200 (VSSEDEDEEMPEDTED) are compositionally biased toward acidic residues. A compositionally biased stretch (basic and acidic residues) spans 212–221 (AEGKKSEDDG). Residues 251–415 (QATDRLMKEL…VQIHEKNGWY (165 aa)) form the UBC core domain. Cys-351 acts as the Glycyl thioester intermediate in catalysis.

It belongs to the ubiquitin-conjugating enzyme family. As to quaternary structure, monomer and homodimer. Only the homodimer is linked to ubiquitin through thiolester activation. Interacts (via N-terminus) with B4GALT1 (via N-terminal cytoplasmic domain). The interaction is direct. Post-translationally, autoubiquitinated in vitro in the presence of NEDD4L. Widely expressed.

It is found in the nucleus. Its subcellular location is the cell projection. The protein resides in the filopodium. The protein localises to the cytoplasm. It localises to the cytosol. The enzyme catalyses S-ubiquitinyl-[E1 ubiquitin-activating enzyme]-L-cysteine + [E2 ubiquitin-conjugating enzyme]-L-cysteine = [E1 ubiquitin-activating enzyme]-L-cysteine + S-ubiquitinyl-[E2 ubiquitin-conjugating enzyme]-L-cysteine.. Its pathway is protein modification; protein ubiquitination. Catalyzes the covalent attachment of ubiquitin to other proteins. May be involved in hormonal homeostasis in females. Involved in regulation of B4GALT1 cell surface expression, B4GALT1-mediated cell adhesion to laminin and embryoid body formation. The protein is Ubiquitin-conjugating enzyme E2 Q1 (UBE2Q1) of Homo sapiens (Human).